A 935-amino-acid polypeptide reads, in one-letter code: C-1-tetrahydrofolate synthase, cytoplasmic (935 aa).

Met-1 is modified (N-acetylmethionine). The tract at residues 2 to 291 (APAGILNGKL…MLMQSTVESA (290 aa)) is methylenetetrahydrofolate dehydrogenase and methenyltetrahydrofolate cyclohydrolase (D/C) domain. Residues 52-56 (YINVK) and 99-101 (VQL) contribute to the substrate site. Lys-56 is an active-site residue. NADP(+)-binding positions include 172–174 (GRS) and Ser-197. 272 to 276 (PGGVG) contacts substrate. The interval 310–935 (LNLKTPVPSD…PETEQVNGLF (626 aa)) is formyltetrahydrofolate synthetase domain. A Phosphoserine modification is found at Ser-318. Residue 380–387 (TPLGEGKS) coordinates ATP. Residues Ser-413 and Ser-490 each carry the phosphoserine modification.

The protein in the N-terminal section; belongs to the tetrahydrofolate dehydrogenase/cyclohydrolase family. This sequence in the C-terminal section; belongs to the formate--tetrahydrofolate ligase family. Homodimer.

Its subcellular location is the cytoplasm. The catalysed reaction is (6R)-5,10-methylene-5,6,7,8-tetrahydrofolate + NADP(+) = (6R)-5,10-methenyltetrahydrofolate + NADPH. It catalyses the reaction (6R)-5,10-methenyltetrahydrofolate + H2O = (6R)-10-formyltetrahydrofolate + H(+). It carries out the reaction (6S)-5,6,7,8-tetrahydrofolate + formate + ATP = (6R)-10-formyltetrahydrofolate + ADP + phosphate. It functions in the pathway one-carbon metabolism; tetrahydrofolate interconversion. Functionally, trifunctional enzyme that catalyzes the interconversion of three forms of one-carbon-substituted tetrahydrofolate: (6R)-5,10-methylene-5,6,7,8-tetrahydrofolate, 5,10-methenyltetrahydrofolate and (6S)-10-formyltetrahydrofolate. These derivatives of tetrahydrofolate are differentially required in nucleotide and amino acid biosynthesis, (6S)-10-formyltetrahydrofolate being required for purine biosynthesis while (6R)-5,10-methylene-5,6,7,8-tetrahydrofolate is used for serine and methionine biosynthesis for instance. The protein is C-1-tetrahydrofolate synthase, cytoplasmic (Mthfd1) of Mus musculus (Mouse).